Consider the following 78-residue polypeptide: Signal peptidase complex subunit 1 (78 aa).

Over 1-18 (MNYLEGTIDFAGQLRCQK) the chain is Cytoplasmic. Residues 19-38 (YMNYGLCTSAVISYIYGYLV) form a helical membrane-spanning segment. Over 39–42 (QDSY) the chain is Lumenal. A helical transmembrane segment spans residues 43-63 (CVIKLFLILASLVALVCLPAW). Residues 64–78 (SMYNKNPLKFQKKKE) are Cytoplasmic-facing.

It belongs to the SPCS1 family. As to quaternary structure, component of the signal peptidase complex (SPC) composed of a catalytic subunit sec11 and three accessory subunits spc1, spc2 and spc3. The complex induces a local thinning of the ER membrane which is used to measure the length of the signal peptide (SP) h-region of protein substrates. This ensures the selectivity of the complex towards h-regions shorter than 18-20 amino acids. SPC associates with the translocon complex.

It localises to the endoplasmic reticulum membrane. In terms of biological role, component of the signal peptidase complex (SPC) which catalyzes the cleavage of N-terminal signal sequences from nascent proteins as they are translocated into the lumen of the endoplasmic reticulum. Dispensable for SPC enzymatic activity. The protein is Signal peptidase complex subunit 1 of Schizosaccharomyces pombe (strain 972 / ATCC 24843) (Fission yeast).